The sequence spans 231 residues: Ribonuclease P protein component 3 (231 aa).

The protein belongs to the eukaryotic/archaeal RNase P protein component 3 family. In terms of assembly, consists of a catalytic RNA component and at least 4-5 protein subunits.

The protein localises to the cytoplasm. The enzyme catalyses Endonucleolytic cleavage of RNA, removing 5'-extranucleotides from tRNA precursor.. Functionally, part of ribonuclease P, a protein complex that generates mature tRNA molecules by cleaving their 5'-ends. The polypeptide is Ribonuclease P protein component 3 (Methanococcus maripaludis (strain C5 / ATCC BAA-1333)).